Here is a 159-residue protein sequence, read N- to C-terminus: Transcriptional repressor NrdR (159 aa).

A zinc finger spans residues 3 to 34 (CPFCRHDDTQVVDSRVSEDGAAIRRRRRCSAC). The 91-residue stretch at 49-139 (PAVVKKDGSR…VYRRFEDVSE (91 aa)) folds into the ATP-cone domain.

Belongs to the NrdR family. Zn(2+) serves as cofactor.

Functionally, negatively regulates transcription of bacterial ribonucleotide reductase nrd genes and operons by binding to NrdR-boxes. The chain is Transcriptional repressor NrdR from Burkholderia thailandensis (strain ATCC 700388 / DSM 13276 / CCUG 48851 / CIP 106301 / E264).